The sequence spans 415 residues: Phosphopentomutase (415 aa).

Asp10, Asp313, His318, Asp354, His355, and His366 together coordinate Mn(2+).

It belongs to the phosphopentomutase family. Requires Mn(2+) as cofactor.

The protein resides in the cytoplasm. The catalysed reaction is 2-deoxy-alpha-D-ribose 1-phosphate = 2-deoxy-D-ribose 5-phosphate. It carries out the reaction alpha-D-ribose 1-phosphate = D-ribose 5-phosphate. Its pathway is carbohydrate degradation; 2-deoxy-D-ribose 1-phosphate degradation; D-glyceraldehyde 3-phosphate and acetaldehyde from 2-deoxy-alpha-D-ribose 1-phosphate: step 1/2. In terms of biological role, isomerase that catalyzes the conversion of deoxy-ribose 1-phosphate (dRib-1-P) and ribose 1-phosphate (Rib-1-P) to deoxy-ribose 5-phosphate (dRib-5-P) and ribose 5-phosphate (Rib-5-P), respectively. The chain is Phosphopentomutase from Psychromonas ingrahamii (strain DSM 17664 / CCUG 51855 / 37).